The sequence spans 160 residues: SsrA-binding protein (160 aa).

The segment at 135-160 (KTHDKRETIKERDWKREQSRILRDRG) is disordered. A compositionally biased stretch (basic and acidic residues) spans 138 to 160 (DKRETIKERDWKREQSRILRDRG).

The protein belongs to the SmpB family.

It localises to the cytoplasm. Its function is as follows. Required for rescue of stalled ribosomes mediated by trans-translation. Binds to transfer-messenger RNA (tmRNA), required for stable association of tmRNA with ribosomes. tmRNA and SmpB together mimic tRNA shape, replacing the anticodon stem-loop with SmpB. tmRNA is encoded by the ssrA gene; the 2 termini fold to resemble tRNA(Ala) and it encodes a 'tag peptide', a short internal open reading frame. During trans-translation Ala-aminoacylated tmRNA acts like a tRNA, entering the A-site of stalled ribosomes, displacing the stalled mRNA. The ribosome then switches to translate the ORF on the tmRNA; the nascent peptide is terminated with the 'tag peptide' encoded by the tmRNA and targeted for degradation. The ribosome is freed to recommence translation, which seems to be the essential function of trans-translation. In Sphingomonas elodea, this protein is SsrA-binding protein.